Here is a 398-residue protein sequence, read N- to C-terminus: KiSS-1 receptor (398 aa).

Residues 1-46 (MHTVATSGPNASWGAPANASGCPGCGANASDGPVPSPRAVDAWLVP) are Extracellular-facing. N-linked (GlcNAc...) asparagine glycosylation is found at Asn10, Asn18, and Asn28. Residues 47–67 (LFFAALMLLGLVGNSLVIYVI) traverse the membrane as a helical segment. Residues 68–78 (CRHKPMRTVTN) lie on the Cytoplasmic side of the membrane. The helical transmembrane segment at 79–101 (FYIANLAATDVTFLLCCVPFTAL) threads the bilayer. The Extracellular segment spans residues 102 to 120 (LYPLPGWVLGDFMCKFVNY). Cys115 and Cys191 form a disulfide bridge. A helical transmembrane segment spans residues 121–138 (IQQVSVQATCATLTAMSV). The Cytoplasmic portion of the chain corresponds to 139–157 (DRWYVTVFPLRALHRRTPR). The helical transmembrane segment at 158–178 (LALAVSLSIWVGSAAVSAPVL) threads the bilayer. The Extracellular portion of the chain corresponds to 179–202 (ALHRLSPGPRAYCSEAFPSRALER). Residues 203–223 (AFALYNLLALYLLPLLATCAC) traverse the membrane as a helical segment. Topologically, residues 224-263 (YAAMLRHLGRVAVRPAPADSALQGQVLAERAGAVRAKVSR) are cytoplasmic. Residues 264–284 (LVAAVVLLFAACWGPIQLFLV) traverse the membrane as a helical segment. The Extracellular segment spans residues 285–305 (LQALGPAGSWHPRSYAAYALK). The helical transmembrane segment at 306–328 (TWAHCMSYSNSALNPLLYAFLGS) threads the bilayer. Over 329–398 (HFRQAFRRVC…CVLGEDNAPL (70 aa)) the chain is Cytoplasmic. The interval 341-363 (APRRPRRPRRPGPSDPAAPHAEL) is disordered.

It belongs to the G-protein coupled receptor 1 family. Most highly expressed in the pancreas, placenta and spinal cord, with lower-level of expression in peripheral blood leukocytes, kidney, lung, fetal liver, stomach, small intestine, testes, spleen, thymus, adrenal glands and lymph nodes. In the adult brain, expressed in the superior frontal gyrus, putamen, caudate nucleus, cingulate gyrus, nucleus accumbens, hippocampus, pons and amygdala, as well as the hypothalamus and pituitary. Expression levels are higher in early (7-9 weeks) than term placentas. Expression levels were increased in both early placentas and molar pregnancies and were reduced in choriocarcinoma cells. Expressed at higher levels in first trimester trophoblasts than at term of gestation. Also found in the extravillous trophoblast suggesting endocrine/paracrine activation mechanism.

It is found in the cell membrane. In terms of biological role, receptor for metastin (kisspeptin-54 or kp-54), a C-terminally amidated peptide of KiSS1. KiSS1 is a metastasis suppressor protein that suppresses metastases in malignant melanomas and in some breast carcinomas without affecting tumorigenicity. The metastasis suppressor properties may be mediated in part by cell cycle arrest and induction of apoptosis in malignant cells. The receptor is essential for normal gonadotropin-released hormone physiology and for puberty. The hypothalamic KiSS1/KISS1R system is a pivotal factor in central regulation of the gonadotropic axis at puberty and in adulthood. The receptor is also probably involved in the regulation and fine-tuning of trophoblast invasion generated by the trophoblast itself. Analysis of the transduction pathways activated by the receptor identifies coupling to phospholipase C and intracellular calcium release through pertussis toxin-insensitive G(q) proteins. The sequence is that of KiSS-1 receptor (KISS1R) from Homo sapiens (Human).